Reading from the N-terminus, the 60-residue chain is UPF0434 protein mma_2578 (60 aa).

This sequence belongs to the UPF0434 family.

The polypeptide is UPF0434 protein mma_2578 (Janthinobacterium sp. (strain Marseille) (Minibacterium massiliensis)).